Consider the following 778-residue polypeptide: Phosphoribosylformylglycinamidine synthase subunit PurL (778 aa).

His-44 is an active-site residue. Residues Tyr-47 and Lys-86 each contribute to the ATP site. Residue Glu-88 coordinates Mg(2+). Substrate-binding positions include 89 to 92 (SHNH) and Arg-111. His-90 functions as the Proton acceptor in the catalytic mechanism. 2 residues coordinate Mg(2+): Asp-112 and Asp-265. 309 to 311 (ESQ) contacts substrate. Positions 455 to 474 (TRQPPGEGLPGRSGQAGPPK) are disordered. Residues Asn-518 and Gly-555 each contribute to the ATP site. Asn-556 contacts Mg(2+). Position 558 (Ser-558) interacts with substrate.

The protein belongs to the FGAMS family. As to quaternary structure, monomer. Part of the FGAM synthase complex composed of 1 PurL, 1 PurQ and 2 PurS subunits.

It localises to the cytoplasm. It catalyses the reaction N(2)-formyl-N(1)-(5-phospho-beta-D-ribosyl)glycinamide + L-glutamine + ATP + H2O = 2-formamido-N(1)-(5-O-phospho-beta-D-ribosyl)acetamidine + L-glutamate + ADP + phosphate + H(+). Its pathway is purine metabolism; IMP biosynthesis via de novo pathway; 5-amino-1-(5-phospho-D-ribosyl)imidazole from N(2)-formyl-N(1)-(5-phospho-D-ribosyl)glycinamide: step 1/2. In terms of biological role, part of the phosphoribosylformylglycinamidine synthase complex involved in the purines biosynthetic pathway. Catalyzes the ATP-dependent conversion of formylglycinamide ribonucleotide (FGAR) and glutamine to yield formylglycinamidine ribonucleotide (FGAM) and glutamate. The FGAM synthase complex is composed of three subunits. PurQ produces an ammonia molecule by converting glutamine to glutamate. PurL transfers the ammonia molecule to FGAR to form FGAM in an ATP-dependent manner. PurS interacts with PurQ and PurL and is thought to assist in the transfer of the ammonia molecule from PurQ to PurL. The chain is Phosphoribosylformylglycinamidine synthase subunit PurL from Symbiobacterium thermophilum (strain DSM 24528 / JCM 14929 / IAM 14863 / T).